The primary structure comprises 450 residues: MSFKDVTAKNFKGLKNVSLKKSMAMEGHTLVGTEARLGDAFELCESFSTSPSNIIEYEYQEEIRPFFQKAGLNKHSIGTHPELTGLGVGMIYNQYTVTMFVDIRKSSRLSLLLPLEQVYVVKNRILQACIDIVRALDGYPHRLMGDALMAFFGRSDVSKEDAIADAINAASTLRLILMDYIFPSLNEDIGEQIDLGVRIGLDYGAEDEVVWGNFGLGSFCEVTALGLPVDMTAKLQQLADKNTAMLGQGILDYIDFPEEYTKPKVKSGEELKYIIPNITNKEGQPINRRIRLLNMARYQELLPFKLNDKKMASAILYPNQFNFECFVIEDNKEVLYNSVSRFLPKKRRLTFKLSIYPGPGIGDLKIIFCKRNHGQEAKDDLSEDYSISIEDNKLIRVKNADNLSLLRKDGCYVLTVPEETLFRGLHTMEVIVRGNHETLFYRNIIGVYIK.

Residues 97–236 (VTMFVDIRKS…LPVDMTAKLQ (140 aa)) form the Guanylate cyclase domain. F100 is an a ribonucleoside 5'-triphosphate binding site. Residues D102, I103, and D146 each contribute to the Mn(2+) site. Residues 318–450 (PNQFNFECFV…YRNIIGVYIK (133 aa)) are AGS-C domain.

The protein belongs to the adenylyl cyclase class-4/guanylyl cyclase family. Pyrimidine cyclase subfamily. In terms of assembly, homodimer. It depends on Mn(2+) as a cofactor.

It is found in the cytoplasm. The enzyme catalyses CTP = 3',5'-cyclic CMP + diphosphate. In E.coli strain MG1655 transformed with both genes cCMP appears between 15 and 30 minutes after infection with phage T5 (at protein level). No cCMP accumulates in uninfected cells. Functionally, pycsar (pyrimidine cyclase system for antiphage resistance) provides immunity against bacteriophage. The pyrimidine cyclase (PycC) synthesizes cyclic nucleotides in response to infection; these serve as specific second messenger signals. The signal activates the adjacent effector, leading to bacterial cell death and abortive phage infection. A clade E Pycsar system. The pyrimidine cyclase gene of a two-gene Pycsar system, generates cyclic CMP (cCMP) from CTP in response to bacteriophage infection. Has little to no activity on ATP, GTP or UTP. Expression of this and adjacent effector EcPycTM (AC P0DV25) confers resistance to bacteriophage P1 and T5; expression of this gene alone does not confer resistance. When cells expressing the Pycsar system are infected by phage T5 at low multiplicity of infection (0.2 MOI) the culture survives, at 2.0 MOI bacteria enter growth arrest. The same cells enter growth arrest after exposure to 250 uM cCMP but not cUMP; thus the effector protein responds only to the cNMP produced by its cognate NTP cyclase. Some of the cells treated with cCMP have abnormal membrane protrusions. The sequence is that of Cytidylate cyclase from Escherichia coli.